We begin with the raw amino-acid sequence, 506 residues long: 7,8-dihydro-6-hydroxymethylpterin dimethyltransferase (506 aa).

6 residues coordinate [4Fe-4S] cluster: C73, C77, C80, C98, C102, and C105. In terms of domain architecture, Radical SAM core spans 82 to 300; the sequence is NHKSTTILAN…FIKLVEEQTD (219 aa).

Belongs to the radical SAM superfamily. [4Fe-4S] cluster serves as cofactor. Requires S-adenosyl-L-methionine as cofactor.

It functions in the pathway cofactor biosynthesis; 5,6,7,8-tetrahydromethanopterin biosynthesis. Is responsible for the addition of methyl groups at C-7 and C-9 of the pterin ring during methanopterin (MPT) biosynthesis. Catalyzes methylation of 7,8-dihydro-6-hydroxymethylpterin, likely using methylenetetrahydromethanopterin as a methyl group donor, via a radical-based mechanism. In Methanocaldococcus jannaschii (strain ATCC 43067 / DSM 2661 / JAL-1 / JCM 10045 / NBRC 100440) (Methanococcus jannaschii), this protein is 7,8-dihydro-6-hydroxymethylpterin dimethyltransferase.